The sequence spans 244 residues: Phosphoadenosine 5'-phosphosulfate reductase (244 aa).

The active-site Nucleophile; cysteine thiosulfonate intermediate is Cys-239.

The protein belongs to the PAPS reductase family. CysH subfamily.

The protein localises to the cytoplasm. The enzyme catalyses [thioredoxin]-disulfide + sulfite + adenosine 3',5'-bisphosphate + 2 H(+) = [thioredoxin]-dithiol + 3'-phosphoadenylyl sulfate. It functions in the pathway sulfur metabolism; hydrogen sulfide biosynthesis; sulfite from sulfate: step 3/3. Functionally, catalyzes the formation of sulfite from phosphoadenosine 5'-phosphosulfate (PAPS) using thioredoxin as an electron donor. The polypeptide is Phosphoadenosine 5'-phosphosulfate reductase (Buchnera aphidicola subsp. Acyrthosiphon pisum (strain 5A)).